The following is a 1340-amino-acid chain: Lysine-specific demethylase ELF6 (1340 aa).

In terms of domain architecture, JmjN spans 16–57; it reads APVFRPTDTEFADPIAYISKIEKEASAFGICKIIPPLPKPSK. Positions 195–245 are disordered; that stretch reads QRKRRGRGFYQRKTENNDPSGKNGEKSSPEVEKAPLASTSLSSQDSSKQKN. Positions 217–227 are enriched in basic and acidic residues; sequence NGEKSSPEVEK. Residues 262–428 enclose the JmjC domain; it reads NSSWNLQMIA…VAKEAAVRRA (167 aa). Residues His305, Glu307, and His396 each coordinate Fe cation. The Nuclear localization signal 1 signature appears at 818–825; that stretch reads GKKEEKII. Residues 1092-1225 are disordered; sequence GEPLESSDIL…SRQQEVPTTT (134 aa). Residues 1099–1115 show a composition bias toward polar residues; that stretch reads DILSSSNGDEASSNGLQ. Over residues 1124–1133 the composition is skewed to low complexity; the sequence is ESEVSSSENT. A compositionally biased stretch (basic and acidic residues) spans 1188–1201; sequence SLKHTETSDEEKKP. Residues 1215–1225 are compositionally biased toward polar residues; the sequence is GSRQQEVPTTT. 4 C2H2-type zinc fingers span residues 1228 to 1250, 1251 to 1275, 1281 to 1305, and 1311 to 1337; these read NRCY…THKR, NRCT…QRVH, FECS…LRLH, and YICK…KTMH. Residues Cys1230, Cys1235, His1248, Cys1253, Cys1258, His1265, His1271, His1275, Cys1283, Cys1288, His1301, His1305, Cys1313, Cys1318, His1331, and His1337 each coordinate Zn(2+). A Nuclear localization signal 2 motif is present at residues 1248–1255; that stretch reads HKRNRCTH. The interval 1260-1333 is DNA-binding; sequence KKFRAHKYLV…FVSDYSRHRR (74 aa).

It belongs to the JHDM3 histone demethylase family. As to quaternary structure, interacts with BZR2 (via N-terminus). As to expression, expressed at low levels in seedlings, cotyledons and leaves. Detected in inflorescences, stems, roots and siliques but not in shoot apical meristems or root tips. Accumulates in flowers and embryos.

The protein localises to the nucleus. The catalysed reaction is N(6),N(6),N(6)-trimethyl-L-lysyl(27)-[histone H3] + 2-oxoglutarate + O2 = N(6),N(6)-dimethyl-L-lysyl(27)-[histone H3] + formaldehyde + succinate + CO2. It carries out the reaction N(6),N(6)-dimethyl-L-lysyl(27)-[histone H3] + 2-oxoglutarate + O2 = N(6)-methyl-L-lysyl(27)-[histone H3] + formaldehyde + succinate + CO2. Its function is as follows. Histone demethylase that demethylates 'Lys-27' (H3K27me) of histone H3, thus acting as a positive regulator of gene expression. Demethylates tri-methylated (H3K27me3) and di-methylated (H3K27me2) H3K27me. Inactive on H3K27me1, H3K4me3, H3K9me2 and H3K36me3. Acts as a repressor of the photoperiodic flowering pathway and of FT. May also be active on H3K4me. Binds around the transcription start site of the FT locus. Required for epigenetic reprogramming by resetting the expression of the floral repressor FLC locus, thus aluviating cold-mediated FLC epigenetically silencing occurring during vernalization and preventing inapropriate epigenetic states inheritence. Functionally, together with REF6, required for H3K27me3 resetting (especially in constitutive heterochromatin within the pericentromeric regions) and transgenerational inheritance of histone marks, thus acting in safeguarding genome and epigenome integrity during sexual reproduction. This is Lysine-specific demethylase ELF6 from Arabidopsis thaliana (Mouse-ear cress).